The sequence spans 346 residues: Elongation factor Ts (346 aa).

Residues 80–83 are involved in Mg(2+) ion dislocation from EF-Tu; sequence TDFV.

The protein belongs to the EF-Ts family.

The protein resides in the cytoplasm. Functionally, associates with the EF-Tu.GDP complex and induces the exchange of GDP to GTP. It remains bound to the aminoacyl-tRNA.EF-Tu.GTP complex up to the GTP hydrolysis stage on the ribosome. The sequence is that of Elongation factor Ts from Streptococcus agalactiae serotype Ia (strain ATCC 27591 / A909 / CDC SS700).